The primary structure comprises 536 residues: REST corepressor 2 (536 aa).

The disordered stretch occupies residues 1–44 (MERSGSGVLSRSRAKTVTNGNSQHSEEESSDEEHPNDSMIRVGG). Residues 24 to 36 (HSEEESSDEEHPN) show a composition bias toward basic and acidic residues. An ELM2 domain is found at 38–123 (SMIRVGGDYQ…KSLADLANFT (86 aa)). An SANT 1 domain is found at 124–175 (PFPDEWTVEDKVLFEQAFSFHGKSFHRIQQMLPDKMITSLVKYYYSWKKTRT). Residues 179–264 (VMDRQARKLL…RARRRPPKGM (86 aa)) form a disordered region. The segment covering 197–211 (NDEIEEGDPGSDSDF) has biased composition (acidic residues). Over residues 249 to 262 (YRHHPLRARRRPPK) the composition is skewed to basic residues. Residues 283 to 315 (VTIRQLDTQLVSLKRQVQKIKQTNSVLRNNLGD) are a coiled coil. Positions 328-379 (KINSRWTTEEQLLAVQAVRRYGKDFAAIADVIGNKTVAQVSSFFVSYRRRFN) constitute an SANT 2 domain. A disordered region spans residues 389–536 (AEQEVQGSSG…GLKVESPQSH (148 aa)). The segment covering 391 to 406 (QEVQGSSGRTVNTELN) has biased composition (polar residues). Residues 422-449 (SPPHSDSPLPSSEGSASGNHSSAQSSPP) are compositionally biased toward low complexity. Pro residues predominate over residues 450-476 (LTQPPPLLRPAPPSAPPSLLRQPPPLQ).

This sequence belongs to the CoREST family.

Its subcellular location is the nucleus. May act as a component of a corepressor complex that represses transcription. The chain is REST corepressor 2 (rcor2) from Danio rerio (Zebrafish).